An 81-amino-acid chain; its full sequence is Pyruvate synthase subunit PorD (81 aa).

4Fe-4S ferredoxin-type domains lie at 25 to 50 (FKPVLDKDKCIDCDNCILFCPEGCIN) and 51 to 80 (REHEIDYDYCKGCGICAEKCPVKAIKMERE). Cys-34, Cys-37, Cys-40, Cys-44, Cys-60, Cys-63, Cys-66, and Cys-70 together coordinate [4Fe-4S] cluster.

In terms of assembly, heterotetramer of one alpha, one beta, one delta and one gamma chain. Requires [4Fe-4S] cluster as cofactor.

The chain is Pyruvate synthase subunit PorD (porD) from Methanothermobacter thermautotrophicus (strain ATCC 29096 / DSM 1053 / JCM 10044 / NBRC 100330 / Delta H) (Methanobacterium thermoautotrophicum).